The sequence spans 657 residues: Trifunctional protein RibF/MnmA (657 aa).

An FMN adenylyltransferase region spans residues 1–141 (MLSIINLTSK…VVKKDHCSTS (141 aa)). Residues 158–282 (LLLTPFYLKG…DKKAALSFFH (125 aa)) form a riboflavin kinase region. The tract at residues 283 to 657 (KQEKPKVVVA…GGGKITKIIK (375 aa)) is tRNA-specific 2-thiouridylase MnmA. ATP contacts are provided by residues 292 to 299 (ALSGGVDS) and Met318. The segment at 389-391 (NPD) is interaction with target base in tRNA. The active-site Nucleophile is Cys394. The cysteines at positions 394 and 492 are disulfide-linked. An ATP-binding site is contributed by Gly420. The segment at 442–444 (KDQ) is interaction with tRNA. Cys492 (cysteine persulfide intermediate) is an active-site residue.

In the N-terminal section; belongs to the RibF family. It in the C-terminal section; belongs to the MnmA/TRMU family.

Its subcellular location is the cytoplasm. The enzyme catalyses riboflavin + ATP = FMN + ADP + H(+). The catalysed reaction is FMN + ATP + H(+) = FAD + diphosphate. It carries out the reaction S-sulfanyl-L-cysteinyl-[protein] + uridine(34) in tRNA + AH2 + ATP = 2-thiouridine(34) in tRNA + L-cysteinyl-[protein] + A + AMP + diphosphate + H(+). It functions in the pathway cofactor biosynthesis; FAD biosynthesis; FAD from FMN: step 1/1. Its pathway is cofactor biosynthesis; FMN biosynthesis; FMN from riboflavin (ATP route): step 1/1. Its function is as follows. Involved in FAD and FMN biosynthesis. Catalyzes the 2-thiolation of uridine at the wobble position (U34) of tRNA, leading to the formation of s(2)U34. The polypeptide is Trifunctional protein RibF/MnmA (ribF/mnmA) (Mycoplasmoides gallisepticum (strain R(low / passage 15 / clone 2)) (Mycoplasma gallisepticum)).